Reading from the N-terminus, the 153-residue chain is 6,7-dimethyl-8-ribityllumazine synthase 1 (153 aa).

5-amino-6-(D-ribitylamino)uracil-binding positions include F16, 50-52 (AYE), and 74-76 (CVI). 79-80 (ET) is a (2S)-2-hydroxy-3-oxobutyl phosphate binding site. Catalysis depends on H82, which acts as the Proton donor. F107 provides a ligand contact to 5-amino-6-(D-ribitylamino)uracil. R121 contributes to the (2S)-2-hydroxy-3-oxobutyl phosphate binding site.

It belongs to the DMRL synthase family.

It catalyses the reaction (2S)-2-hydroxy-3-oxobutyl phosphate + 5-amino-6-(D-ribitylamino)uracil = 6,7-dimethyl-8-(1-D-ribityl)lumazine + phosphate + 2 H2O + H(+). The protein operates within cofactor biosynthesis; riboflavin biosynthesis; riboflavin from 2-hydroxy-3-oxobutyl phosphate and 5-amino-6-(D-ribitylamino)uracil: step 1/2. In terms of biological role, catalyzes the formation of 6,7-dimethyl-8-ribityllumazine by condensation of 5-amino-6-(D-ribitylamino)uracil with 3,4-dihydroxy-2-butanone 4-phosphate. This is the penultimate step in the biosynthesis of riboflavin. The protein is 6,7-dimethyl-8-ribityllumazine synthase 1 of Caulobacter vibrioides (strain ATCC 19089 / CIP 103742 / CB 15) (Caulobacter crescentus).